The primary structure comprises 555 residues: Trehalase (555 aa).

The N-terminal stretch at 1–16 (MIPFLLMVAFADTVLQ) is a signal peptide. A glycan (N-linked (GlcNAc...) asparagine) is linked at N46. Substrate contacts are provided by residues R164, 171-172 (WD), and N208. N216 is a glycosylation site (N-linked (GlcNAc...) asparagine). Substrate is bound by residues 217–219 (RSQ), 282–284 (RPE), and G316. D318 functions as the Proton donor/acceptor in the catalytic mechanism. N-linked (GlcNAc...) asparagine glycans are attached at residues N334 and N371. Catalysis depends on E516, which acts as the Proton donor/acceptor. Substrate is bound at residue E531.

Belongs to the glycosyl hydrolase 37 family. As to expression, bean-shaped accessory glands (bags).

It is found in the secreted. It catalyses the reaction alpha,alpha-trehalose + H2O = alpha-D-glucose + beta-D-glucose. The sequence is that of Trehalase from Tenebrio molitor (Yellow mealworm beetle).